The chain runs to 355 residues: UDP-N-acetylglucosamine--N-acetylmuramyl-(pentapeptide) pyrophosphoryl-undecaprenol N-acetylglucosamine transferase (355 aa).

UDP-N-acetyl-alpha-D-glucosamine contacts are provided by residues threonine 15–glycine 17, asparagine 127, arginine 163, serine 191, isoleucine 244, alanine 263–glutamate 268, and glutamine 288.

This sequence belongs to the glycosyltransferase 28 family. MurG subfamily.

The protein localises to the cell inner membrane. The enzyme catalyses di-trans,octa-cis-undecaprenyl diphospho-N-acetyl-alpha-D-muramoyl-L-alanyl-D-glutamyl-meso-2,6-diaminopimeloyl-D-alanyl-D-alanine + UDP-N-acetyl-alpha-D-glucosamine = di-trans,octa-cis-undecaprenyl diphospho-[N-acetyl-alpha-D-glucosaminyl-(1-&gt;4)]-N-acetyl-alpha-D-muramoyl-L-alanyl-D-glutamyl-meso-2,6-diaminopimeloyl-D-alanyl-D-alanine + UDP + H(+). The protein operates within cell wall biogenesis; peptidoglycan biosynthesis. Cell wall formation. Catalyzes the transfer of a GlcNAc subunit on undecaprenyl-pyrophosphoryl-MurNAc-pentapeptide (lipid intermediate I) to form undecaprenyl-pyrophosphoryl-MurNAc-(pentapeptide)GlcNAc (lipid intermediate II). The protein is UDP-N-acetylglucosamine--N-acetylmuramyl-(pentapeptide) pyrophosphoryl-undecaprenol N-acetylglucosamine transferase of Sodalis glossinidius (strain morsitans).